A 63-amino-acid polypeptide reads, in one-letter code: Chymotrypsin/elastase isoinhibitor 1 (63 aa).

Cystine bridges form between Cys5/Cys38, Cys14/Cys33, Cys17/Cys29, Cys21/Cys60, and Cys40/Cys54. The 56-residue stretch at 5 to 60 folds into the TIL domain; it reads CGPNEVWTECTGCEMKCGPDENTPCPLMCRRPSCECSPGRGMRRTNDGKCIPASQC.

It belongs to the serine protease inhibitor-like (TIL domain-containing) family.

The protein resides in the secreted. Functionally, defends the organism against the host's proteinases. The polypeptide is Chymotrypsin/elastase isoinhibitor 1 (Ascaris suum (Pig roundworm)).